Reading from the N-terminus, the 309-residue chain is 2-phospho-L-lactate transferase (309 aa).

7,8-didemethyl-8-hydroxy-5-deazariboflavin-binding residues include D48 and K87.

The protein belongs to the CofD family. Homodimer. Mg(2+) serves as cofactor.

The catalysed reaction is (2S)-lactyl-2-diphospho-5'-guanosine + 7,8-didemethyl-8-hydroxy-5-deazariboflavin = oxidized coenzyme F420-0 + GMP + H(+). It functions in the pathway cofactor biosynthesis; coenzyme F420 biosynthesis. Its function is as follows. Catalyzes the transfer of the 2-phospholactate moiety from (2S)-lactyl-2-diphospho-5'-guanosine to 7,8-didemethyl-8-hydroxy-5-deazariboflavin (FO) with the formation of oxidized coenzyme F420-0 and GMP. The polypeptide is 2-phospho-L-lactate transferase (Methanosarcina barkeri (strain Fusaro / DSM 804)).